The chain runs to 493 residues: NADH-quinone oxidoreductase subunit N (493 aa).

A run of 14 helical transmembrane segments spans residues 8-28 (ALLP…AIAI), 34-54 (LVFW…PHAS), 71-91 (GLFF…LCLA), 102-122 (EIFV…SSAH), 123-143 (LAMF…MIAY), 157-177 (YLML…MVYG), 200-220 (ALAG…LVPF), 232-252 (PTPV…ALLL), 266-286 (FLCV…LLAL), 294-314 (LLAY…VAAG), 325-345 (IAFY…AISA), 370-390 (AAVL…VGFV), 405-427 (WPLV…RVVL), and 443-463 (PAAG…GLFP). A disordered region spans residues 473 to 493 (VPQPPPTADSPQRLTATGGLP).

This sequence belongs to the complex I subunit 2 family. In terms of assembly, NDH-1 is composed of 14 different subunits. Subunits NuoA, H, J, K, L, M, N constitute the membrane sector of the complex.

It is found in the cell inner membrane. It carries out the reaction a quinone + NADH + 5 H(+)(in) = a quinol + NAD(+) + 4 H(+)(out). NDH-1 shuttles electrons from NADH, via FMN and iron-sulfur (Fe-S) centers, to quinones in the respiratory chain. The immediate electron acceptor for the enzyme in this species is believed to be ubiquinone. Couples the redox reaction to proton translocation (for every two electrons transferred, four hydrogen ions are translocated across the cytoplasmic membrane), and thus conserves the redox energy in a proton gradient. The chain is NADH-quinone oxidoreductase subunit N from Methylococcus capsulatus (strain ATCC 33009 / NCIMB 11132 / Bath).